Here is a 30-residue protein sequence, read N- to C-terminus: Cliotide T20 (30 aa).

A cross-link (cyclopeptide (Gly-Asn)) is located at residues 1-30 (GSAIRCGESCLLGKCYTPGCTCDRPICKKN). Disulfide bonds link C6/C20, C10/C22, and C15/C27.

Post-translationally, contains 3 disulfide bonds. In terms of processing, this is a cyclic peptide. As to expression, expressed in root nodules but not in seed.

Functionally, probably participates in a plant defense mechanism. Active against Gram-negative bacterium E.coli ATCC 700926 (MIC=0.5 uM) under low-salt conditions. Not active against Gram-positive bacterium S.aureus ATCC 12600 up to a concentration of 100 uM under low-salt conditions. Exhibits immunomodulatory activity but no cytotoxicity in vitro. The polypeptide is Cliotide T20 (Clitoria ternatea (Butterfly pea)).